Here is a 251-residue protein sequence, read N- to C-terminus: Imidazole glycerol phosphate synthase subunit HisF (251 aa).

Residues D11 and D130 contribute to the active site.

The protein belongs to the HisA/HisF family. In terms of assembly, heterodimer of HisH and HisF.

It localises to the cytoplasm. The catalysed reaction is 5-[(5-phospho-1-deoxy-D-ribulos-1-ylimino)methylamino]-1-(5-phospho-beta-D-ribosyl)imidazole-4-carboxamide + L-glutamine = D-erythro-1-(imidazol-4-yl)glycerol 3-phosphate + 5-amino-1-(5-phospho-beta-D-ribosyl)imidazole-4-carboxamide + L-glutamate + H(+). It participates in amino-acid biosynthesis; L-histidine biosynthesis; L-histidine from 5-phospho-alpha-D-ribose 1-diphosphate: step 5/9. Its function is as follows. IGPS catalyzes the conversion of PRFAR and glutamine to IGP, AICAR and glutamate. The HisF subunit catalyzes the cyclization activity that produces IGP and AICAR from PRFAR using the ammonia provided by the HisH subunit. The chain is Imidazole glycerol phosphate synthase subunit HisF from Cytophaga hutchinsonii (strain ATCC 33406 / DSM 1761 / CIP 103989 / NBRC 15051 / NCIMB 9469 / D465).